Consider the following 444-residue polypeptide: Trigger factor (444 aa).

The PPIase FKBP-type domain occupies 170-255 (NDIAVIDFVG…LKAIKQLEIT (86 aa)).

Belongs to the FKBP-type PPIase family. Tig subfamily.

The protein resides in the cytoplasm. It catalyses the reaction [protein]-peptidylproline (omega=180) = [protein]-peptidylproline (omega=0). In terms of biological role, involved in protein export. Acts as a chaperone by maintaining the newly synthesized protein in an open conformation. Functions as a peptidyl-prolyl cis-trans isomerase. The chain is Trigger factor (tig) from Mycoplasma pneumoniae (strain ATCC 29342 / M129 / Subtype 1) (Mycoplasmoides pneumoniae).